Here is a 142-residue protein sequence, read N- to C-terminus: Cystatin-8 (142 aa).

The N-terminal stretch at 1 to 19 is a signal peptide; sequence MAKPLWLSLILFIIPVALA. An N-linked (GlcNAc...) asparagine glycan is attached at asparagine 39. The Secondary area of contact signature appears at 77-81; it reads QITDR. Intrachain disulfides connect cysteine 95–cysteine 105 and cysteine 119–cysteine 139. Asparagine 100 carries N-linked (GlcNAc...) asparagine glycosylation.

Belongs to the cystatin family. As to expression, proximal caput region of the epididymis. Lower expression in the testis. Within the testis it is localized to the elongating spermatids, whereas within the epididymis it is exclusively synthesized by the proximal caput epithelium.

It is found in the secreted. Its function is as follows. Performs a specialized role during sperm development and maturation. The polypeptide is Cystatin-8 (Cst8) (Mus musculus (Mouse)).